We begin with the raw amino-acid sequence, 316 residues long: Ribosomal RNA small subunit methyltransferase H (316 aa).

S-adenosyl-L-methionine-binding positions include 35 to 37 (GGH), D55, F79, D101, and Q108. The segment at 291–316 (AIKPSKDEVDENTRSRSSVLRIAEKL) is disordered. A compositionally biased stretch (basic and acidic residues) spans 294–304 (PSKDEVDENTR).

The protein belongs to the methyltransferase superfamily. RsmH family.

The protein localises to the cytoplasm. It carries out the reaction cytidine(1402) in 16S rRNA + S-adenosyl-L-methionine = N(4)-methylcytidine(1402) in 16S rRNA + S-adenosyl-L-homocysteine + H(+). Functionally, specifically methylates the N4 position of cytidine in position 1402 (C1402) of 16S rRNA. This chain is Ribosomal RNA small subunit methyltransferase H, found in Vibrio atlanticus (strain LGP32) (Vibrio splendidus (strain Mel32)).